Consider the following 882-residue polypeptide: E3 ubiquitin-protein ligase SH3RF3 (882 aa).

The disordered stretch occupies residues Ala-18–Ala-42. The RING-type zinc-finger motif lies at Cys-57 to Arg-98. The segment at Arg-124–Ser-159 is disordered. SH3 domains lie at Cys-194–Pro-253 and His-256–Ser-319. Residues Arg-368–His-399 form a disordered region. The interval Arg-369–Ala-439 is interaction with RAC1. The residue at position 400 (Ser-400) is a Phosphoserine. Residues Gln-433–Thr-444 show a composition bias toward polar residues. Positions Gln-433–Thr-458 are disordered. Residues Leu-464–Arg-525 enclose the SH3 3 domain. 3 stretches are compositionally biased toward polar residues: residues Pro-575–Thr-588, Ala-596–Ser-635, and Leu-697–Gly-706. 2 disordered regions span residues Pro-575 to Pro-664 and Pro-693 to Asp-747. A compositionally biased stretch (basic and acidic residues) spans Lys-708 to Ser-721. Ser-797 is subject to Phosphoserine. An SH3 4 domain is found at Leu-823 to Phe-882.

The protein belongs to the SH3RF family. In terms of assembly, interacts (via SH3 domain 3) with PAK2. Interacts with RAC1 (GTP-bound form). In terms of processing, autoubiquitinated.

It catalyses the reaction S-ubiquitinyl-[E2 ubiquitin-conjugating enzyme]-L-cysteine + [acceptor protein]-L-lysine = [E2 ubiquitin-conjugating enzyme]-L-cysteine + N(6)-ubiquitinyl-[acceptor protein]-L-lysine.. It participates in protein modification; protein ubiquitination. Has E3 ubiquitin-protein ligase activity. This Homo sapiens (Human) protein is E3 ubiquitin-protein ligase SH3RF3 (SH3RF3).